Reading from the N-terminus, the 178-residue chain is Ribosome maturation factor RimP (178 aa).

Belongs to the RimP family.

It is found in the cytoplasm. Functionally, required for maturation of 30S ribosomal subunits. The protein is Ribosome maturation factor RimP of Corynebacterium glutamicum (strain ATCC 13032 / DSM 20300 / JCM 1318 / BCRC 11384 / CCUG 27702 / LMG 3730 / NBRC 12168 / NCIMB 10025 / NRRL B-2784 / 534).